Here is a 277-residue protein sequence, read N- to C-terminus: Undecaprenyl-diphosphatase (277 aa).

Transmembrane regions (helical) follow at residues 88-108 (MGWLVILGSLPIIVLGLLFQD), 117-137 (MWIVATMLIVFGLILAVADAV), 157-179 (FAQAMALIPGVSRSGGTITAGLL), 191-211 (SFLLAIPAVFGSGLYQLYKVV), 227-247 (LATVIAFVVGYVIIGWFLKFV), and 255-275 (FVWYRIFLGLALYLLLGFGVI).

The protein belongs to the UppP family.

The protein localises to the cell membrane. It carries out the reaction di-trans,octa-cis-undecaprenyl diphosphate + H2O = di-trans,octa-cis-undecaprenyl phosphate + phosphate + H(+). In terms of biological role, catalyzes the dephosphorylation of undecaprenyl diphosphate (UPP). Confers resistance to bacitracin. The sequence is that of Undecaprenyl-diphosphatase from Pseudarthrobacter chlorophenolicus (strain ATCC 700700 / DSM 12829 / CIP 107037 / JCM 12360 / KCTC 9906 / NCIMB 13794 / A6) (Arthrobacter chlorophenolicus).